Reading from the N-terminus, the 67-residue chain is GVRDAYIADDKNCVYTCAKNSYCNTECTKNGAESGYCQWLGKYGNGCWCIKLPDKVPIRIPGRCRGR.

The LCN-type CS-alpha/beta domain occupies 3-65 (RDAYIADDKN…VPIRIPGRCR (63 aa)). Intrachain disulfides connect cysteine 13–cysteine 64, cysteine 17–cysteine 37, cysteine 23–cysteine 47, and cysteine 27–cysteine 49. Arginine 65 bears the Arginine amide mark.

The protein belongs to the long (4 C-C) scorpion toxin superfamily. Sodium channel inhibitor family. Alpha subfamily. Expressed by the venom gland.

The protein resides in the secreted. In terms of biological role, alpha toxins bind voltage-independently at site-3 of sodium channels (Nav) and inhibit the inactivation of the activated channels, thereby blocking neuronal transmission. Since the experiments have been done on F11 cells (immortalized cell line derived from rat DRG neurons mainly expressing Nav1.3/SCN3A, but also Nav1.7/SCN9A and Nav1.2/SCN2A), it is supposed to act on these channels. The slow of inactivation process is partially reversible. Is lethal to mice. In Buthacus macrocentrus (Turkish scorpion), this protein is Alpha-toxin Bu1.